We begin with the raw amino-acid sequence, 320 residues long: Cytochrome f (320 aa).

A signal peptide spans 1-35; that stretch reads MQTRNTFSWIREEITRSISVSLMIYIITWASISSA. Residues Tyr-36, Cys-56, Cys-59, and His-60 each contribute to the heme site. A helical membrane pass occupies residues 286–306; the sequence is VQGLLFFLGSVVLAQIFLVLK.

This sequence belongs to the cytochrome f family. In terms of assembly, the 4 large subunits of the cytochrome b6-f complex are cytochrome b6, subunit IV (17 kDa polypeptide, petD), cytochrome f and the Rieske protein, while the 4 small subunits are PetG, PetL, PetM and PetN. The complex functions as a dimer. Requires heme as cofactor.

The protein resides in the plastid. The protein localises to the chloroplast thylakoid membrane. Component of the cytochrome b6-f complex, which mediates electron transfer between photosystem II (PSII) and photosystem I (PSI), cyclic electron flow around PSI, and state transitions. The chain is Cytochrome f from Nasturtium officinale (Watercress).